The chain runs to 291 residues: Ribosomal RNA small subunit methyltransferase A (291 aa).

The S-adenosyl-L-methionine site is built by histidine 37, leucine 39, glycine 64, glutamate 85, aspartate 110, and asparagine 131.

This sequence belongs to the class I-like SAM-binding methyltransferase superfamily. rRNA adenine N(6)-methyltransferase family. RsmA subfamily.

The protein resides in the cytoplasm. The catalysed reaction is adenosine(1518)/adenosine(1519) in 16S rRNA + 4 S-adenosyl-L-methionine = N(6)-dimethyladenosine(1518)/N(6)-dimethyladenosine(1519) in 16S rRNA + 4 S-adenosyl-L-homocysteine + 4 H(+). Functionally, specifically dimethylates two adjacent adenosines (A1518 and A1519) in the loop of a conserved hairpin near the 3'-end of 16S rRNA in the 30S particle. May play a critical role in biogenesis of 30S subunits. The polypeptide is Ribosomal RNA small subunit methyltransferase A (Dehalococcoides mccartyi (strain ATCC BAA-2100 / JCM 16839 / KCTC 5957 / BAV1)).